The chain runs to 427 residues: Gamma-glutamyl phosphate reductase (427 aa).

Belongs to the gamma-glutamyl phosphate reductase family.

The protein localises to the cytoplasm. It catalyses the reaction L-glutamate 5-semialdehyde + phosphate + NADP(+) = L-glutamyl 5-phosphate + NADPH + H(+). The protein operates within amino-acid biosynthesis; L-proline biosynthesis; L-glutamate 5-semialdehyde from L-glutamate: step 2/2. Functionally, catalyzes the NADPH-dependent reduction of L-glutamate 5-phosphate into L-glutamate 5-semialdehyde and phosphate. The product spontaneously undergoes cyclization to form 1-pyrroline-5-carboxylate. The polypeptide is Gamma-glutamyl phosphate reductase (Rhizobium etli (strain CIAT 652)).